The chain runs to 162 residues: 2-C-methyl-D-erythritol 2,4-cyclodiphosphate synthase (162 aa).

Residues D12 and H14 each coordinate a divalent metal cation. 4-CDP-2-C-methyl-D-erythritol 2-phosphate-binding positions include 12-14 (DVH) and 38-39 (HS). Position 46 (H46) interacts with a divalent metal cation. 4-CDP-2-C-methyl-D-erythritol 2-phosphate contacts are provided by residues 60-62 (DIG), 65-69 (FPDTD), and R146.

This sequence belongs to the IspF family. Homotrimer. Requires a divalent metal cation as cofactor.

It carries out the reaction 4-CDP-2-C-methyl-D-erythritol 2-phosphate = 2-C-methyl-D-erythritol 2,4-cyclic diphosphate + CMP. Its pathway is isoprenoid biosynthesis; isopentenyl diphosphate biosynthesis via DXP pathway; isopentenyl diphosphate from 1-deoxy-D-xylulose 5-phosphate: step 4/6. Its function is as follows. Involved in the biosynthesis of isopentenyl diphosphate (IPP) and dimethylallyl diphosphate (DMAPP), two major building blocks of isoprenoid compounds. Catalyzes the conversion of 4-diphosphocytidyl-2-C-methyl-D-erythritol 2-phosphate (CDP-ME2P) to 2-C-methyl-D-erythritol 2,4-cyclodiphosphate (ME-CPP) with a corresponding release of cytidine 5-monophosphate (CMP). In Bordetella avium (strain 197N), this protein is 2-C-methyl-D-erythritol 2,4-cyclodiphosphate synthase.